Here is a 524-residue protein sequence, read N- to C-terminus: Bifunctional purine biosynthesis protein PurH (524 aa).

In terms of domain architecture, MGS-like spans 1–149; that stretch reads MSDPVIKRAL…KNNESVTVVT (149 aa).

This sequence belongs to the PurH family.

The catalysed reaction is (6R)-10-formyltetrahydrofolate + 5-amino-1-(5-phospho-beta-D-ribosyl)imidazole-4-carboxamide = 5-formamido-1-(5-phospho-D-ribosyl)imidazole-4-carboxamide + (6S)-5,6,7,8-tetrahydrofolate. It carries out the reaction IMP + H2O = 5-formamido-1-(5-phospho-D-ribosyl)imidazole-4-carboxamide. The protein operates within purine metabolism; IMP biosynthesis via de novo pathway; 5-formamido-1-(5-phospho-D-ribosyl)imidazole-4-carboxamide from 5-amino-1-(5-phospho-D-ribosyl)imidazole-4-carboxamide (10-formyl THF route): step 1/1. It functions in the pathway purine metabolism; IMP biosynthesis via de novo pathway; IMP from 5-formamido-1-(5-phospho-D-ribosyl)imidazole-4-carboxamide: step 1/1. In Chlorobium chlorochromatii (strain CaD3), this protein is Bifunctional purine biosynthesis protein PurH.